The sequence spans 252 residues: Small ribosomal subunit protein uS2 (252 aa).

This sequence belongs to the universal ribosomal protein uS2 family.

The polypeptide is Small ribosomal subunit protein uS2 (Chlorobium phaeobacteroides (strain DSM 266 / SMG 266 / 2430)).